Here is a 193-residue protein sequence, read N- to C-terminus: dTTP/UTP pyrophosphatase (193 aa).

Asp-77 acts as the Proton acceptor in catalysis.

Belongs to the Maf family. YhdE subfamily. It depends on a divalent metal cation as a cofactor.

Its subcellular location is the cytoplasm. The catalysed reaction is dTTP + H2O = dTMP + diphosphate + H(+). It carries out the reaction UTP + H2O = UMP + diphosphate + H(+). Nucleoside triphosphate pyrophosphatase that hydrolyzes dTTP and UTP. May have a dual role in cell division arrest and in preventing the incorporation of modified nucleotides into cellular nucleic acids. The polypeptide is dTTP/UTP pyrophosphatase (Bacteroides fragilis (strain ATCC 25285 / DSM 2151 / CCUG 4856 / JCM 11019 / LMG 10263 / NCTC 9343 / Onslow / VPI 2553 / EN-2)).